The sequence spans 119 residues: Large ribosomal subunit protein uL18 (119 aa).

This sequence belongs to the universal ribosomal protein uL18 family. Part of the 50S ribosomal subunit; part of the 5S rRNA/L5/L18/L25 subcomplex. Contacts the 5S and 23S rRNAs.

In terms of biological role, this is one of the proteins that bind and probably mediate the attachment of the 5S RNA into the large ribosomal subunit, where it forms part of the central protuberance. In Xylella fastidiosa (strain 9a5c), this protein is Large ribosomal subunit protein uL18.